A 586-amino-acid polypeptide reads, in one-letter code: Arginine--tRNA ligase (586 aa).

The 'HIGH' region signature appears at Ala-131–His-141.

This sequence belongs to the class-I aminoacyl-tRNA synthetase family. Monomer.

The protein localises to the cytoplasm. It carries out the reaction tRNA(Arg) + L-arginine + ATP = L-arginyl-tRNA(Arg) + AMP + diphosphate. This Nitrosomonas europaea (strain ATCC 19718 / CIP 103999 / KCTC 2705 / NBRC 14298) protein is Arginine--tRNA ligase.